Here is a 259-residue protein sequence, read N- to C-terminus: Phosphate import ATP-binding protein PstB (259 aa).

Positions 11–254 (AESKNLNFYY…PDNPRTEDYI (244 aa)) constitute an ABC transporter domain. 43 to 50 (GPSGCGKS) is a binding site for ATP.

The protein belongs to the ABC transporter superfamily. Phosphate importer (TC 3.A.1.7) family. In terms of assembly, the complex is composed of two ATP-binding proteins (PstB), two transmembrane proteins (PstC and PstA) and a solute-binding protein (PstS).

The protein localises to the cell inner membrane. The catalysed reaction is phosphate(out) + ATP + H2O = ADP + 2 phosphate(in) + H(+). Part of the ABC transporter complex PstSACB involved in phosphate import. Responsible for energy coupling to the transport system. In Geobacter sulfurreducens (strain ATCC 51573 / DSM 12127 / PCA), this protein is Phosphate import ATP-binding protein PstB.